The chain runs to 699 residues: Elongation factor G (699 aa).

Positions 8–283 constitute a tr-type G domain; the sequence is EHIRNIGICA…AVVDFLPSPI (276 aa). GTP-binding positions include 17–24, 81–85, and 135–138; these read AHIDAGKT, DTPGH, and NKMD.

Belongs to the TRAFAC class translation factor GTPase superfamily. Classic translation factor GTPase family. EF-G/EF-2 subfamily.

It is found in the cytoplasm. Functionally, catalyzes the GTP-dependent ribosomal translocation step during translation elongation. During this step, the ribosome changes from the pre-translocational (PRE) to the post-translocational (POST) state as the newly formed A-site-bound peptidyl-tRNA and P-site-bound deacylated tRNA move to the P and E sites, respectively. Catalyzes the coordinated movement of the two tRNA molecules, the mRNA and conformational changes in the ribosome. The protein is Elongation factor G of Rickettsia rickettsii.